A 320-amino-acid polypeptide reads, in one-letter code: Putative thiosulfate sulfurtransferase 2 (320 aa).

Rhodanese domains are found at residues 18–125 (HAPK…PLSS) and 154–267 (AINV…HACP). Catalysis depends on Cys233, which acts as the Cysteine persulfide intermediate. A substrate-binding site is contributed by Arg238.

It catalyses the reaction thiosulfate + hydrogen cyanide = thiocyanate + sulfite + 2 H(+). Its function is as follows. May be a sulfotransferase involved in the formation of thiosulfate. The sequence is that of Putative thiosulfate sulfurtransferase 2 (cysA2) from Mycobacterium bovis (strain ATCC BAA-935 / AF2122/97).